The primary structure comprises 578 residues: Probable arginine--tRNA ligase, mitochondrial (578 aa).

A mitochondrion-targeting transit peptide spans 1–16; it reads MACGFRRAIACQLSRV. L-arginine is bound by residues 133–135, His144, Tyr322, Asp326, and Gln350; that span reads SPN. The short motif at 133–144 is the 'HIGH' region element; sequence SPNVAKKFHVGH. The residue at position 568 (Lys568) is an N6-acetyllysine.

Belongs to the class-I aminoacyl-tRNA synthetase family.

The protein resides in the mitochondrion membrane. It carries out the reaction tRNA(Arg) + L-arginine + ATP = L-arginyl-tRNA(Arg) + AMP + diphosphate. Catalyzes the attachment of arginine to tRNA(Arg) in a two-step reaction: arginine is first activated by ATP to form Arg-AMP and then transferred to the acceptor end of tRNA(Arg). This Homo sapiens (Human) protein is Probable arginine--tRNA ligase, mitochondrial (RARS2).